The following is a 284-amino-acid chain: Four and a half LIM domains protein 5 (284 aa).

The segment at 8–32 (CQYCTASLLGKKYVLKDDNLYCISC) adopts a C4-type zinc-finger fold. LIM zinc-binding domains follow at residues 39–100 (NYCE…ECSS), 101–160 (KCFH…KEFA), 161–220 (HYCN…LYAK), and 221–283 (KCAA…ADTD).

In terms of assembly, interacts with CREM (via the third LIM domain). Interacts (via second LIM domain) with SPAG8.

The protein resides in the nucleus. Functionally, may be involved in the regulation of spermatogenesis. Stimulates CREM transcriptional activity in a phosphorylation-independent manner. This Rattus norvegicus (Rat) protein is Four and a half LIM domains protein 5 (Fhl5).